The primary structure comprises 336 residues: Deoxyhypusine hydroxylase (336 aa).

2 HEAT-like PBS-type repeats span residues 68 to 94 and 101 to 127; these read LKHELAYCLGQTRNTDALPFLLDVVQD and CRHEAAEALGALGYESSLEVLKALRDN. Fe cation contacts are provided by His-70, Glu-71, His-103, and Glu-104. The interval 158 to 179 is disordered; sequence LKPSDFTSIDPAPPMPLTAKEP. HEAT-like PBS-type repeat units follow at residues 235 to 261 and 268 to 295; these read FRHEIAFVFGQLCHPASVPSLTETLSD and VRHEAAEALGSLGDVEGVEDTLKKFLND. Fe cation contacts are provided by His-237, Glu-238, His-270, and Glu-271.

The protein belongs to the deoxyhypusine hydroxylase family. Fe(2+) serves as cofactor.

Its subcellular location is the cytoplasm. The protein localises to the nucleus. The catalysed reaction is [eIF5A protein]-deoxyhypusine + AH2 + O2 = [eIF5A protein]-hypusine + A + H2O. The protein operates within protein modification; eIF5A hypusination. Functionally, catalyzes the hydroxylation of the N(6)-(4-aminobutyl)-L-lysine intermediate to form hypusine, an essential post-translational modification only found in mature eIF-5A factor. The polypeptide is Deoxyhypusine hydroxylase (lia1) (Emericella nidulans (strain FGSC A4 / ATCC 38163 / CBS 112.46 / NRRL 194 / M139) (Aspergillus nidulans)).